The chain runs to 193 residues: Achaete-scute homolog 2 (193 aa).

3 disordered regions span residues 1–27, 37–56, and 118–177; these read MDGGTLPRSAPPAPPVPVGCAARRRPA, RRRPATAETGGGAAAVARRN, and GGLR…GALS. Positions 50–102 constitute a bHLH domain; it reads AAVARRNERERNRVKLVNLGFQALRQHVPHGGASKKLSKVETLRSAVEYIRAL. The segment covering 140 to 150 has biased composition (low complexity); it reads AASPSRASSSP.

Efficient DNA binding requires dimerization with another basic helix-loop-helix (bHLH) protein. Forms heterodimers with bHLH transcription factor TCF3. May not heterodimerise with bHLH protein HAND1. In terms of tissue distribution, expressed in the placenta at a stage between the first and second trimesters and when it matures, at about 32-36 weeks. Expressed in the extravillous trophoblasts, the intermediate trophoblasts, and at lower levels in the cytotrophoblasts and stroma of chorionic villi of the developing placenta. Expressed in follicular T-helper (Tfh) cells.

The protein localises to the nucleus. Functionally, transcription factor. Binds to E-box motifs 5'-CANNTG-3' in the regulatory elements of target genes, probably as a heterodimer with another basic helix-loop-helix (bHLH) protein such as the transcription factor TCF3. May bind both open and closed chromatin, acting as a pioneer transcription factor to allow other factors to bind and activate lineage-specific genes. Required during post-implantation development for the generation of some differentiated trophoblast cell types. Transcriptional activity of ASCL2 may be antagonised in a subset of trophoblast cells by bHLH transcription factor HAND1, perhaps by competing for dimerization with other bHLH proteins. Involved in differentiation and function of follicular T-helper (Tfh) cells, thereby playing a role in germinal center responses; probably modulates expression of genes involved in Tfh cell function, such as BCL6. May also act as a suppressor of Th1-, Th2- and Th17-cell differentiation. Induces the formation of stem cells in intestinal crypts in vitro, synergistically activating transcription of target genes, such as SOX9, together with TCF4/beta-catenin. May form a bistable transcriptional switch, controlling expression of its own gene together with Wnt/R-spondin signaling, and thereby maintaining stem cell characteristics. Modulates expression of target genes, including perhaps down-regulating EGR1/Krox24 and chemokine CXCL10/Mob-1 and up-regulating CXCR4 and CDKN1C/p57kip2, in Schwann cells. May play a role in reducing proliferation of Schwann cells, perhaps acting via modulation of expression of CDKN1C. May be dispensable for blastocyst formation and later embryonic function. May be involved in the determination of neuronal precursors. The sequence is that of Achaete-scute homolog 2 (ASCL2) from Homo sapiens (Human).